Here is a 145-residue protein sequence, read N- to C-terminus: D-aminoacyl-tRNA deacylase (145 aa).

The Gly-cisPro motif, important for rejection of L-amino acids signature appears at 137 to 138 (GP).

This sequence belongs to the DTD family. Homodimer.

The protein resides in the cytoplasm. The enzyme catalyses glycyl-tRNA(Ala) + H2O = tRNA(Ala) + glycine + H(+). It catalyses the reaction a D-aminoacyl-tRNA + H2O = a tRNA + a D-alpha-amino acid + H(+). An aminoacyl-tRNA editing enzyme that deacylates mischarged D-aminoacyl-tRNAs. Also deacylates mischarged glycyl-tRNA(Ala), protecting cells against glycine mischarging by AlaRS. Acts via tRNA-based rather than protein-based catalysis; rejects L-amino acids rather than detecting D-amino acids in the active site. By recycling D-aminoacyl-tRNA to D-amino acids and free tRNA molecules, this enzyme counteracts the toxicity associated with the formation of D-aminoacyl-tRNA entities in vivo and helps enforce protein L-homochirality. In Shewanella baltica (strain OS155 / ATCC BAA-1091), this protein is D-aminoacyl-tRNA deacylase.